The primary structure comprises 341 residues: HTH-type transcriptional repressor PurR (341 aa).

In terms of domain architecture, HTH lacI-type spans 2–56 (ATIKDVAKRANVSTTTVSHVINKTRFVAEETRNAVWAAIKELHYSPSAVARSLKV). The H-T-H motif DNA-binding region spans 4–23 (IKDVAKRANVSTTTVSHVIN). The DNA-binding element occupies 48–56 (SAVARSLKV). Residues Tyr73, Arg190, Thr192, Phe221, and Asp275 each coordinate hypoxanthine.

In terms of assembly, homodimer.

The protein operates within purine metabolism; purine nucleotide biosynthesis [regulation]. Is the main repressor of the genes involved in the de novo synthesis of purine nucleotides, regulating purB, purC, purEK, purF, purHD, purL, purMN and guaBA expression. PurR is allosterically activated to bind its cognate DNA by binding the purine corepressors, hypoxanthine or guanine, thereby effecting transcription repression. The chain is HTH-type transcriptional repressor PurR from Klebsiella pneumoniae (strain 342).